The chain runs to 1399 residues: DNA-directed RNA polymerase subunit beta' (1399 aa).

Residues cysteine 71, cysteine 73, cysteine 86, and cysteine 89 each coordinate Zn(2+). Positions 462, 464, and 466 each coordinate Mg(2+). Residues cysteine 810, cysteine 884, cysteine 891, and cysteine 894 each contribute to the Zn(2+) site.

This sequence belongs to the RNA polymerase beta' chain family. The RNAP catalytic core consists of 2 alpha, 1 beta, 1 beta' and 1 omega subunit. When a sigma factor is associated with the core the holoenzyme is formed, which can initiate transcription. It depends on Mg(2+) as a cofactor. The cofactor is Zn(2+).

It catalyses the reaction RNA(n) + a ribonucleoside 5'-triphosphate = RNA(n+1) + diphosphate. Its function is as follows. DNA-dependent RNA polymerase catalyzes the transcription of DNA into RNA using the four ribonucleoside triphosphates as substrates. The chain is DNA-directed RNA polymerase subunit beta' from Nitrobacter winogradskyi (strain ATCC 25391 / DSM 10237 / CIP 104748 / NCIMB 11846 / Nb-255).